The primary structure comprises 317 residues: Neurogenic differentiation factor 6-B (317 aa).

2 disordered regions span residues 1-90 and 297-317; these read MLTV…ERSR and DLHPRSQSFQSQDELNTGYHN. Over residues 37–56 the composition is skewed to acidic residues; it reads EAEDDNTDREEEEEREEDEN. Residues 59 to 69 are compositionally biased toward basic residues; it reads PKKKGPRKKKS. The short motif at 65–70 is the Nuclear localization signal element; it reads RKKKSE. Residues 70–90 show a composition bias toward basic and acidic residues; it reads EGRGDRVKMRRQEANARERSR. One can recognise a bHLH domain in the interval 78–130; it reads MRRQEANARERSRMHGLNDALESLRKVVPCYSKTQKLSKIETLRLAKNYIWAL. Residues 301–317 are compositionally biased toward polar residues; the sequence is RSQSFQSQDELNTGYHN.

In terms of assembly, efficient DNA binding requires dimerization with another bHLH protein. Embryonic olfactory bulbs and olfactory placodes. In adult, expressed in brain and eye.

The protein localises to the nucleus. Differentiation factor required for neurogenesis. Does not act as an upstream activator of isl1. The protein is Neurogenic differentiation factor 6-B of Danio rerio (Zebrafish).